The primary structure comprises 149 residues: MKKIIKLSLLSLSIAGLASCSTLGLGGSDDAKASAKDTAAAQTATTEQAAAVSKPTAKVSLNKLGQDKIKATVYTAYNNNPQGSVRLQWQAPEGSKCHDTSFPITKYAEKNDKTWATVTVKQGNNFCSGKWTANVVYDKEVIASDSINI.

Positions 1–19 (MKKIIKLSLLSLSIAGLAS) are cleaved as a signal peptide. Cys-20 carries the N-palmitoyl cysteine lipid modification. Residue Cys-20 is the site of S-diacylglycerol cysteine attachment.

The protein resides in the cell outer membrane. This Francisella tularensis subsp. holarctica (strain LVS) protein is 17 kDa major membrane protein.